Reading from the N-terminus, the 421-residue chain is Adenylosuccinate synthetase (421 aa).

Residues 11-17 (GDEGKGK) and 39-41 (GHT) contribute to the GTP site. Aspartate 12 serves as the catalytic Proton acceptor. Mg(2+)-binding residues include aspartate 12 and glycine 39. Residues 12–15 (DEGK), 37–40 (NAGH), threonine 129, arginine 143, asparagine 219, threonine 234, and arginine 298 contribute to the IMP site. Histidine 40 (proton donor) is an active-site residue. 294–300 (VTTGRRR) contacts substrate. Residues arginine 300, 326–328 (KLD), and 409–411 (GTG) contribute to the GTP site.

It belongs to the adenylosuccinate synthetase family. As to quaternary structure, homodimer. Mg(2+) is required as a cofactor.

Its subcellular location is the cytoplasm. It catalyses the reaction IMP + L-aspartate + GTP = N(6)-(1,2-dicarboxyethyl)-AMP + GDP + phosphate + 2 H(+). It participates in purine metabolism; AMP biosynthesis via de novo pathway; AMP from IMP: step 1/2. In terms of biological role, plays an important role in the de novo pathway and in the salvage pathway of purine nucleotide biosynthesis. Catalyzes the first committed step in the biosynthesis of AMP from IMP. This is Adenylosuccinate synthetase from Paracoccidioides brasiliensis (strain Pb03).